The following is a 207-amino-acid chain: Large ribosomal subunit protein uL4 (207 aa).

It belongs to the universal ribosomal protein uL4 family. Part of the 50S ribosomal subunit.

In terms of biological role, one of the primary rRNA binding proteins, this protein initially binds near the 5'-end of the 23S rRNA. It is important during the early stages of 50S assembly. It makes multiple contacts with different domains of the 23S rRNA in the assembled 50S subunit and ribosome. Forms part of the polypeptide exit tunnel. This is Large ribosomal subunit protein uL4 from Rickettsia africae (strain ESF-5).